A 788-amino-acid polypeptide reads, in one-letter code: Protein translocase subunit SecA 2 (788 aa).

ATP is bound by residues Gln-86, 104–108 (GEGKT), and Asp-493.

It belongs to the SecA family. As to quaternary structure, monomer and homodimer. Part of the essential Sec protein translocation apparatus which comprises SecA, SecYEG and auxiliary proteins SecDF. Other proteins may also be involved.

It is found in the cell membrane. It localises to the cytoplasm. The enzyme catalyses ATP + H2O + cellular proteinSide 1 = ADP + phosphate + cellular proteinSide 2.. In terms of biological role, part of the Sec protein translocase complex. Interacts with the SecYEG preprotein conducting channel. Has a central role in coupling the hydrolysis of ATP to the transfer of proteins into and across the cell membrane, serving as an ATP-driven molecular motor driving the stepwise translocation of polypeptide chains across the membrane. The polypeptide is Protein translocase subunit SecA 2 (Bacillus cereus (strain ZK / E33L)).